The following is a 113-amino-acid chain: Ribonuclease P protein component (113 aa).

It belongs to the RnpA family. In terms of assembly, consists of a catalytic RNA component (M1 or rnpB) and a protein subunit.

The catalysed reaction is Endonucleolytic cleavage of RNA, removing 5'-extranucleotides from tRNA precursor.. Its function is as follows. RNaseP catalyzes the removal of the 5'-leader sequence from pre-tRNA to produce the mature 5'-terminus. It can also cleave other RNA substrates such as 4.5S RNA. The protein component plays an auxiliary but essential role in vivo by binding to the 5'-leader sequence and broadening the substrate specificity of the ribozyme. The protein is Ribonuclease P protein component of Desulforamulus reducens (strain ATCC BAA-1160 / DSM 100696 / MI-1) (Desulfotomaculum reducens).